Consider the following 240-residue polypeptide: Ribosomal RNA small subunit methyltransferase G (240 aa).

S-adenosyl-L-methionine-binding positions include G77, F82, 128–129, and R148; that span reads AE. The interval 217 to 240 is disordered; it reads EKRSKTPKKYPRKAGTPNKSPLLK.

It belongs to the methyltransferase superfamily. RNA methyltransferase RsmG family.

It is found in the cytoplasm. In terms of biological role, specifically methylates the N7 position of guanine in position 535 of 16S rRNA. The sequence is that of Ribosomal RNA small subunit methyltransferase G from Staphylococcus carnosus (strain TM300).